Consider the following 117-residue polypeptide: Large ribosomal subunit protein bL19 (117 aa).

The protein belongs to the bacterial ribosomal protein bL19 family.

In terms of biological role, this protein is located at the 30S-50S ribosomal subunit interface and may play a role in the structure and function of the aminoacyl-tRNA binding site. The chain is Large ribosomal subunit protein bL19 from Shewanella sediminis (strain HAW-EB3).